Reading from the N-terminus, the 188-residue chain is Pyridoxal 5'-phosphate synthase subunit PdxT (188 aa).

46–48 (GES) serves as a coordination point for L-glutamine. The Nucleophile role is filled by C78. L-glutamine contacts are provided by residues R105 and 134 to 135 (IR). Catalysis depends on charge relay system residues H170 and E172.

It belongs to the glutaminase PdxT/SNO family. As to quaternary structure, in the presence of PdxS, forms a dodecamer of heterodimers. Only shows activity in the heterodimer.

It carries out the reaction aldehydo-D-ribose 5-phosphate + D-glyceraldehyde 3-phosphate + L-glutamine = pyridoxal 5'-phosphate + L-glutamate + phosphate + 3 H2O + H(+). The enzyme catalyses L-glutamine + H2O = L-glutamate + NH4(+). The protein operates within cofactor biosynthesis; pyridoxal 5'-phosphate biosynthesis. Catalyzes the hydrolysis of glutamine to glutamate and ammonia as part of the biosynthesis of pyridoxal 5'-phosphate. The resulting ammonia molecule is channeled to the active site of PdxS. This is Pyridoxal 5'-phosphate synthase subunit PdxT from Desulforamulus reducens (strain ATCC BAA-1160 / DSM 100696 / MI-1) (Desulfotomaculum reducens).